We begin with the raw amino-acid sequence, 76 residues long: UPF0352 protein PC1_1633 (76 aa).

This sequence belongs to the UPF0352 family.

This chain is UPF0352 protein PC1_1633, found in Pectobacterium carotovorum subsp. carotovorum (strain PC1).